The sequence spans 1245 residues: Nidogen-1 (1245 aa).

The first 28 residues, 1 to 28 (MLDASGCSWAMWTWALLQLLLLVGPGGC), serve as a signal peptide directing secretion. The region spanning 106-268 (PFLADLDTTD…GVWVFEIGSP (163 aa)) is the NIDO domain. N-linked (GlcNAc...) asparagine glycosylation occurs at Asn187. Tyr290 and Tyr295 each carry sulfotyrosine. The O-linked (GalNAc...) threonine glycan is linked to Thr299. The tract at residues 307–344 (VATPSPSHSPRRGYPDPHNVPRILSPGYEATERPRGVP) is disordered. Ser331 carries O-linked (GalNAc...) serine glycosylation. O-linked (GalNAc...) threonine glycosylation is found at Thr337 and Thr345. Residue Thr348 is glycosylated (O-linked (GalNAc...) threonine; partial). The EGF-like 1 domain maps to 384 to 424 (SQQTCANNRHQCSVHAECRDYATGFCCRCVANYTGNGRQCV). Cystine bridges form between Cys388-Cys401, Cys395-Cys410, Cys409-Cys616, Cys412-Cys423, Cys670-Cys683, Cys677-Cys693, Cys695-Cys706, Cys712-Cys725, Cys719-Cys734, Cys736-Cys748, Cys760-Cys775, Cys767-Cys785, Cys787-Cys798, Cys804-Cys815, Cys809-Cys824, Cys826-Cys837, Cys847-Cys876, Cys887-Cys894, and Cys896-Cys917. A glycan (N-linked (GlcNAc...) asparagine) is linked at Asn415. One can recognise a Nidogen G2 beta-barrel domain in the interval 428–665 (SPQRVNGKVK…GPVRDGSPDA (238 aa)). The 42-residue stretch at 666 to 707 (LQNPCYIGTHGCDSNAACRPGPGTQFTCECSIGFRGDGQTCY) folds into the EGF-like 2 domain. The Cell attachment site motif lies at 700–702 (RGD). An EGF-like 3; calcium-binding domain is found at 708–749 (DIDECSEQPSRCGNHAVCNNLPGTFRCECVEGYHFSDRGTCV). The EGF-like 4 domain maps to 756–799 (PINYCETGLHNCDIPQRAQCIYMGGSSYTCSCLPGFSGDGRACR). Residues 800–838 (DVDECQHSRCHPDAFCYNTPGSFTCQCKPGYQGDGFRCM) enclose the EGF-like 5; calcium-binding domain. Residues 844–917 (KTRCQLEREH…RTPPGMRPPC (74 aa)) enclose the Thyroglobulin type-1 domain. Thr920 and Thr933 each carry an O-linked (GalNAc...) threonine glycan. LDL-receptor class B repeat units follow at residues 988–1030 (KVVY…DHLG), 1031–1073 (RTIF…DPVR), 1074–1118 (GNLY…DAFS), and 1119–1160 (SQLC…YGKN). In terms of domain architecture, EGF-like 6 spans 1206-1242 (GHNYCSVNNGGCTHLCLPTPGSRTCRCPDNTLGVDCI). 3 disulfides stabilise this stretch: Cys1210–Cys1221, Cys1217–Cys1230, and Cys1232–Cys1241.

Interacts with FBLN1. Interacts with LGALS3BP. Interacts with PLXDC1. Interacts with SVEP1. Post-translationally, N- and O-glycosylated.

Its subcellular location is the secreted. It localises to the extracellular space. It is found in the extracellular matrix. The protein resides in the basement membrane. Sulfated glycoprotein widely distributed in basement membranes and tightly associated with laminin. Also binds to collagen IV and perlecan. It probably has a role in cell-extracellular matrix interactions. This is Nidogen-1 (Nid1) from Mus musculus (Mouse).